We begin with the raw amino-acid sequence, 76 residues long: uncharacterized protein (76 aa).

2 EF-hand domains span residues 9 to 44 (EMDEEAEEAFDLFDVTHKGYIDFEDLRRSCAQLGEN) and 43 to 76 (ENLTKEQLQLMLDLAGTNGKVSREEFAELWIHIS).

Its subcellular location is the cytoplasm. It localises to the nucleus. This is an uncharacterized protein from Schizosaccharomyces pombe (strain 972 / ATCC 24843) (Fission yeast).